A 236-amino-acid polypeptide reads, in one-letter code: Small ribosomal subunit protein uS5 (236 aa).

A compositionally biased stretch (basic and acidic residues) spans 1–10 (MTENNEKDIQ). The interval 1–64 (MTENNEKDIQ…GRDGGREAEK (64 aa)) is disordered. The segment covering 11–27 (VTEAVAAPATETAAPAT) has biased composition (low complexity). A compositionally biased stretch (basic and acidic residues) spans 28 to 64 (TDDRRGGARRGERGDRGQGRGDRGGRGGRDGGREAEK). Residues 67–130 (FVERVVTINR…EEAKKSFFRV (64 aa)) enclose the S5 DRBM domain.

This sequence belongs to the universal ribosomal protein uS5 family. As to quaternary structure, part of the 30S ribosomal subunit. Contacts proteins S4 and S8.

With S4 and S12 plays an important role in translational accuracy. In terms of biological role, located at the back of the 30S subunit body where it stabilizes the conformation of the head with respect to the body. This is Small ribosomal subunit protein uS5 from Arthrobacter sp. (strain FB24).